The following is a 178-amino-acid chain: Heavy metal-associated isoprenylated plant protein 30 (178 aa).

Residues Leu45–Glu108 enclose the HMA domain. 2 residues coordinate a metal cation: Cys56 and Cys59. Cys175 is modified (cysteine methyl ester). Cys175 carries S-farnesyl cysteine lipidation. Residues Ser176–Met178 constitute a propeptide, removed in mature form.

This sequence belongs to the HIPP family. As to quaternary structure, interacts with ZHD3/HB21, ZHD11/HB29 and ZHD8/HB30.

Functionally, heavy-metal-binding protein. The chain is Heavy metal-associated isoprenylated plant protein 30 from Arabidopsis thaliana (Mouse-ear cress).